The sequence spans 171 residues: Myosin regulatory light chain 12A (171 aa).

Threonine 18 bears the Phosphothreonine; by MLCK mark. Serine 19 bears the Phosphoserine; by MLCK mark. 3 consecutive EF-hand domains span residues 28 to 63 (SQIQEFKEAFNMIDQNRDGFIDKEDLHDMLASLGKN), 97 to 132 (DPEDVIRNAFACFDEEATGTIQEDYLRELLTTMGDR), and 133 to 168 (FTDEEVDELYREAPIDKKGNFNYIEFTRILKHGAKD). Residues aspartate 41, asparagine 43, aspartate 45, and aspartate 52 each contribute to the Ca(2+) site.

As to quaternary structure, myosin is a hexamer of 2 heavy chains and 4 light chains. In terms of processing, phosphorylation increases the actin-activated myosin ATPase activity and thereby regulates the contractile activity. It is required to generate the driving force in the migration of the cells but not necessary for localization of myosin-2 at the leading edge.

In terms of biological role, myosin regulatory subunit that plays an important role in regulation of both smooth muscle and nonmuscle cell contractile activity via its phosphorylation. Implicated in cytokinesis, receptor capping, and cell locomotion. In Homo sapiens (Human), this protein is Myosin regulatory light chain 12A (MYL12A).